We begin with the raw amino-acid sequence, 351 residues long: Protein RecA (351 aa).

Position 68–75 (68–75 (GPESSGKT)) interacts with ATP.

This sequence belongs to the RecA family.

The protein localises to the cytoplasm. Functionally, can catalyze the hydrolysis of ATP in the presence of single-stranded DNA, the ATP-dependent uptake of single-stranded DNA by duplex DNA, and the ATP-dependent hybridization of homologous single-stranded DNAs. It interacts with LexA causing its activation and leading to its autocatalytic cleavage. The polypeptide is Protein RecA (Thermotoga neapolitana (strain ATCC 49049 / DSM 4359 / NBRC 107923 / NS-E)).